The chain runs to 50 residues: Nosiheptide precursor (50 aa).

The segment at residues S38–C39 is a cross-link (thiazole-4-carboxylic acid (Ser-Cys)). Positions S38–C46 form a cross-link, 3-hydroxypyridine-2,5-dicarboxylic acid (Ser-Cys) (with S-47). The 3-hydroxypyridine-2,5-dicarboxylic acid (Ser-Ser) (with C-46) cross-link spans S38–S47. Positions T41 to C42 form a cross-link, thiazole-4-carboxylic acid (Thr-Cys). Position 43 is a 4-hydroxyglutamate (E43). The segment at residues E43 to C44 is a cross-link (thiazole-4-carboxylic acid (Glu-Cys)). A cross-link (2-(cystein-S-ylcarbonyl)-3-methyl-4-(glutam-5-yloxy)methylindole (Glu-Cys)) is located at residues E43 to C45. The segment at residues C45 to C46 is a cross-link (thiazole-4-carboxylic acid (Cys-Cys)). The thiazole-4-carboxylic acid (Ser-Cys) cross-link spans S47–C48. Position 49 is a 2,3-didehydroalanine (Ser) (S49). The residue at position 49 (S49) is a Serine amide; atypical.

This sequence belongs to the thiocillin family. The amidation of Ser-49 is produced by the oxidative cleavage of Ser-50 rather than of a glycine, as in eukaryotes.

Its function is as follows. Inhibits bacterial protein biosynthesis by binding to ribosomes. Specifically, binds to the complex of 23S rRNA and ribosomal protein L11 (RPLK) in the 50S ribosomal subunit. While allowing a weak binding of elongation factor G (EF-G) to the ribosome and subsequent GTP-hydrolysis, probably impairs conformational changes in both the ribosome and EF-G which are necessary for translocation. In vitro, inhibits Gram-positive bacteria S.aureus strain 209P (MIC=0.0009 ug/ml), S.aureus strain 133 (MIC=0.0019 ug/ml), S.aureus strain B3 (MIC=0.003 ug/ml), S.aureus strain Hb (MIC=0.003 ug/ml), M.citreus strain ATCC 8411 (MIC=0.0038 ug/ml), M.lysodeikticus strain ATCC 4698 (MIC=0.003 ug/ml), S.lutea strain ATCC 9341 (MIC=0.0011 ug/ml), S.faecalis strain ATCC 9790 (MIC=0.0007 ug/ml), S.viridans (MIC=0.0065 ug/ml), S.pyogenes hemolyticus strain Dig7 (MIC=0.00028 ug/ml), D.pneumoniae strain Til (MIC=0.00015 ug/ml), N.catrrhalis (MIC=0.0017 ug/ml), L.casei strain ATCC 6633 (MIC=0.003 ug/ml), B.cereus strain ATCC 6630 (MIC=0.0071 ug/ml) and various isolates of L.monocytogenes. In vitro, inhibits Gram-negative bacterium P.multocida strain A125 (MIC=0.0024 ug/ml) but not M.smegmatis strain ATCC 6630, S.typhimurium, A.aerogenes strain ATCC 8308, P.vulgaris, K.pneumoniae strain ATCC 10031, S.marcescens strain A476, P.aeruginosa strain Bass or B.bronchiseptica strain CN387. Does not inhibit Gram-negative bacterium E.coli strain ATCC 9637 but does inhibit purified ribosomes from E.coli. In vivo, has no systemic effect in mice infected with staphylococci or streptococci when applied orally or subcutaneously. Has a local effect in mice infected subcutaneously or intraperitoneally with staphylococci when applied immediately afterwards. Is not toxic to mice. This Streptomyces actuosus protein is Nosiheptide precursor.